Consider the following 565-residue polypeptide: Urocanate hydratase (565 aa).

Residues glycine 61–glycine 62, glutamine 139, glycine 185–glycine 187, glutamate 205, arginine 210, asparagine 251–alanine 252, glutamine 272–histidine 276, tyrosine 282–leucine 283, and tyrosine 331 contribute to the NAD(+) site. Cysteine 419 is an active-site residue. Residues leucine 453–serine 472 form a disordered region. Basic and acidic residues predominate over residues arginine 463–serine 472. An NAD(+)-binding site is contributed by glycine 501.

This sequence belongs to the urocanase family. Requires NAD(+) as cofactor.

The protein localises to the cytoplasm. The catalysed reaction is 4-imidazolone-5-propanoate = trans-urocanate + H2O. The protein operates within amino-acid degradation; L-histidine degradation into L-glutamate; N-formimidoyl-L-glutamate from L-histidine: step 2/3. Its function is as follows. Catalyzes the conversion of urocanate to 4-imidazolone-5-propionate. In Pseudomonas syringae pv. tomato (strain ATCC BAA-871 / DC3000), this protein is Urocanate hydratase.